The chain runs to 208 residues: Translation initiation factor 2 subunit beta (208 aa).

The TRAM domain maps to 145–203 (VIEEGETYELRIESVGSKGDGIAKVDKYLIFVPNTSKGEIVKAKVKKISGTLAFAEIVE).

Belongs to the eIF-2-beta/eIF-5 family. Heterotrimer composed of an alpha, a beta and a gamma chain.

Functionally, eIF-2 functions in the early steps of protein synthesis by forming a ternary complex with GTP and initiator tRNA. The protein is Translation initiation factor 2 subunit beta of Methanothrix thermoacetophila (strain DSM 6194 / JCM 14653 / NBRC 101360 / PT) (Methanosaeta thermophila).